Consider the following 418-residue polypeptide: Queuine tRNA-ribosyltransferase accessory subunit 2 (418 aa).

Cys325, Cys327, Cys330, and His356 together coordinate Zn(2+).

Belongs to the queuine tRNA-ribosyltransferase family. QTRT2 subfamily. In terms of assembly, heterodimer of a catalytic subunit and an accessory subunit. Zn(2+) serves as cofactor.

It is found in the cytoplasm. Non-catalytic subunit of the queuine tRNA-ribosyltransferase (TGT) that catalyzes the base-exchange of a guanine (G) residue with queuine (Q) at position 34 (anticodon wobble position) in tRNAs with GU(N) anticodons (tRNA-Asp, -Asn, -His and -Tyr), resulting in the hypermodified nucleoside queuosine (7-(((4,5-cis-dihydroxy-2-cyclopenten-1-yl)amino)methyl)-7-deazaguanosine). The polypeptide is Queuine tRNA-ribosyltransferase accessory subunit 2 (Drosophila yakuba (Fruit fly)).